The primary structure comprises 505 residues: Forkhead box protein O4 (505 aa).

Disordered regions lie at residues 1–66 (MDPE…HSEP), 175–244 (SSWW…SPCP), and 257–276 (RPRSSSNASTVSTRLSPMRP). Thr-32 carries the phosphothreonine; by PKB/AKT1 modification. The tract at residues 97-215 (RRNAWGNQSY…RGRSKGPKKK (119 aa)) is required for interaction with FOXK1. Positions 100 to 188 (AWGNQSYAEL…MLNPDGGKGG (89 aa)) form a DNA-binding region, fork-head. Ser-197 bears the Phosphoserine; by PKB/AKT1 mark. Over residues 205 to 216 (LRGRSKGPKKKP) the composition is skewed to basic residues. Residues 257-271 (RPRSSSNASTVSTRL) show a composition bias toward polar residues. Ser-262 is modified (phosphoserine; by PKB/AKT1).

Interacts with CREBBP/CBP, MYOCD, SIRT1, SRF and YWHAZ. Acetylated by CREBBP/CBP and deacetylated by SIRT1. Binding of YWHAZ inhibits DNA-binding. Interacts with USP7; the interaction is enhanced in presence of hydrogen peroxide and occurs independently of TP53. Interacts with NLK, and this inhibits monoubiquitination and transcriptional activity. Interacts with FOXK1; the interaction inhibits MEF2C transactivation activity. Post-translationally, acetylation by CREBBP/CBP is induced by oxidative stress and inhibits transcriptional activity. Deacetylation by SIRT1 is NAD-dependent and stimulates transcriptional activity. In terms of processing, phosphorylation by PKB/AKT1 inhibits transcriptional activity and is responsible for cytoplasmic localization. May be phosphorylated at multiple sites by NLK. Monoubiquitinated; monoubiquitination is induced by oxidative stress and reduced by deacetylase inhibitors; results in its relocalization to the nucleus and its increased transcriptional activity. Deubiquitinated by USP7; deubiquitination is induced by oxidative stress; enhances its interaction with USP7 and consequently, deubiquitination; increases its translocation to the cytoplasm and inhibits its transcriptional activity. Hydrogene-peroxide-induced ubiquitination and USP7-mediated deubiquitination have no major effect on its protein stability. Strongly expressed in brown adipose tissue and weakly in white adipose tissue (at protein level). Expressed in skeletal muscle.

It localises to the cytoplasm. The protein localises to the nucleus. Functionally, transcription factor involved in the regulation of the insulin signaling pathway. Binds to insulin-response elements (IREs) and can activate transcription of IGFBP1. Down-regulates expression of HIF1A and suppresses hypoxia-induced transcriptional activation of HIF1A-modulated genes. Also involved in negative regulation of the cell cycle. Involved in increased proteasome activity in embryonic stem cells (ESCs) by activating expression of PSMD11 in ESCs, leading to enhanced assembly of the 26S proteasome, followed by higher proteasome activity. Represses smooth muscle cell differentiation by inhibiting the transcriptional coactivator activity of myocardin. In Mus musculus (Mouse), this protein is Forkhead box protein O4 (Foxo4).